A 119-amino-acid polypeptide reads, in one-letter code: MKRIAFVFSTVPHGTAAGREGLDALLATSALTDDLAVFFIADGVFQLLPGQKPDAVLARDYIATFKLLGLYDIEQCWVCAASLRERGLDPQTPFVVEATPLEADALRRELANYDVILRF.

The protein belongs to the DsrF/TusC family. As to quaternary structure, heterohexamer, formed by a dimer of trimers. The hexameric TusBCD complex contains 2 copies each of TusB, TusC and TusD. The TusBCD complex interacts with TusE.

It localises to the cytoplasm. Functionally, part of a sulfur-relay system required for 2-thiolation of 5-methylaminomethyl-2-thiouridine (mnm(5)s(2)U) at tRNA wobble positions. The sequence is that of Protein TusC from Escherichia coli O45:K1 (strain S88 / ExPEC).